Here is a 137-residue protein sequence, read N- to C-terminus: Large ribosomal subunit protein uL16 (137 aa).

Belongs to the universal ribosomal protein uL16 family. In terms of assembly, part of the 50S ribosomal subunit.

In terms of biological role, binds 23S rRNA and is also seen to make contacts with the A and possibly P site tRNAs. The chain is Large ribosomal subunit protein uL16 from Methylobacterium sp. (strain 4-46).